We begin with the raw amino-acid sequence, 400 residues long: Dual specificity mitogen-activated protein kinase kinase 2 (400 aa).

Met1 bears the N-acetylmethionine mark. Phosphoserine is present on Ser23. One can recognise a Protein kinase domain in the interval 72–369 (FERISELGAG…LKMLTNHTFI (298 aa)). Residues 78 to 86 (LGAGNGGVV) and Lys101 each bind ATP. The active-site Proton acceptor is the Asp194. (Microbial infection) O-acetylserine; by Yersinia YopJ; alternate occurs at positions 222 and 226. Ser222 is subject to Phosphoserine; by RAF; alternate. Ser226 carries the post-translational modification Phosphoserine; alternate. The tract at residues 286 to 310 (GEEGEPHSISPRPRPPGRPVSGHGM) is disordered. Phosphoserine occurs at positions 293, 295, and 306. Phosphothreonine is present on residues Thr394 and Thr396.

The protein belongs to the protein kinase superfamily. STE Ser/Thr protein kinase family. MAP kinase kinase subfamily. As to quaternary structure, interacts with MORG1. Interacts with SGK1. Interacts with KSR1. Interacts with KSR1 and BRAF; the interaction with KSR1 mediates KSR1-BRAF dimerization. Interacts with GLS. The cofactor is Mg(2+). In terms of processing, MAPKK is itself dependent on Ser/Thr phosphorylation for activity catalyzed by MAP kinase kinase kinases (RAF or MEKK1). Phosphorylated by MAP2K1/MEK1. Post-translationally, (Microbial infection) Acetylation of Ser-222 and Ser-226 by Yersinia YopJ prevents phosphorylation and activation, thus blocking the MAPK signaling pathway.

It is found in the cytoplasm. It localises to the membrane. The enzyme catalyses L-seryl-[protein] + ATP = O-phospho-L-seryl-[protein] + ADP + H(+). It catalyses the reaction L-threonyl-[protein] + ATP = O-phospho-L-threonyl-[protein] + ADP + H(+). The catalysed reaction is L-tyrosyl-[protein] + ATP = O-phospho-L-tyrosyl-[protein] + ADP + H(+). Functionally, catalyzes the concomitant phosphorylation of a threonine and a tyrosine residue in a Thr-Glu-Tyr sequence located in MAP kinases. Activates the ERK1 and ERK2 MAP kinases. Activates BRAF in a KSR1 or KSR2-dependent manner; by binding to KSR1 or KSR2 releases the inhibitory intramolecular interaction between KSR1 or KSR2 protein kinase and N-terminal domains which promotes KSR1 or KSR2-BRAF dimerization and BRAF activation. The sequence is that of Dual specificity mitogen-activated protein kinase kinase 2 (MAP2K2) from Homo sapiens (Human).